We begin with the raw amino-acid sequence, 78 residues long: Acyl carrier protein (78 aa).

The 76-residue stretch at 1 to 76 folds into the Carrier domain; it reads MALFEDIQAV…DVVKYIEDNK (76 aa). Ser36 bears the O-(pantetheine 4'-phosphoryl)serine mark.

It belongs to the acyl carrier protein (ACP) family. Post-translationally, 4'-phosphopantetheine is transferred from CoA to a specific serine of apo-ACP by AcpS. This modification is essential for activity because fatty acids are bound in thioester linkage to the sulfhydryl of the prosthetic group.

It is found in the cytoplasm. The protein operates within lipid metabolism; fatty acid biosynthesis. Carrier of the growing fatty acid chain in fatty acid biosynthesis. The sequence is that of Acyl carrier protein from Helicobacter pylori (strain ATCC 700392 / 26695) (Campylobacter pylori).